Reading from the N-terminus, the 118-residue chain is NADPH-dependent 7-cyano-7-deazaguanine reductase (118 aa).

Cysteine 34 serves as the catalytic Thioimide intermediate. Aspartate 41 (proton donor) is an active-site residue. Substrate-binding positions include 56 to 58 and 75 to 76; these read VEL and HE.

It belongs to the GTP cyclohydrolase I family. QueF type 1 subfamily.

It localises to the cytoplasm. It carries out the reaction 7-aminomethyl-7-carbaguanine + 2 NADP(+) = 7-cyano-7-deazaguanine + 2 NADPH + 3 H(+). It participates in tRNA modification; tRNA-queuosine biosynthesis. In terms of biological role, catalyzes the NADPH-dependent reduction of 7-cyano-7-deazaguanine (preQ0) to 7-aminomethyl-7-deazaguanine (preQ1). In Halorhodospira halophila (strain DSM 244 / SL1) (Ectothiorhodospira halophila (strain DSM 244 / SL1)), this protein is NADPH-dependent 7-cyano-7-deazaguanine reductase.